The primary structure comprises 215 residues: Jasmonate monooxygenase ABM (215 aa).

Residues 2-90 (FAVIFETRPQ…GVLEDYHLRV (89 aa)) enclose the ABM domain.

Its subcellular location is the endoplasmic reticulum. The protein resides in the secreted. The catalysed reaction is jasmonate + NADPH + O2 + H(+) = (1R,2R)-12-hydroxyjasmonate + NADP(+) + H2O. Its function is as follows. Monooxygenase that converts the endogenous (and likely the host) jasmonate (JA) to its hydroxylated derivative 12-hydroxyjasmonate (12OH-JA), also known as tuberonic acid, a compound that attenuates or disables jasmonate-based host innate immunity and which is essential for proper initiation and elaboration of the blast disease in rice. ABM, together with a polyketide synthase MGG_04775 and the esterase MGG_04774, share the secondary metabolism gene cluster with ABC transporter ABC3, and therefore may also be involved in the synthesis of other important metabolites such as the ABC3 transporter efflux substrate (ATS) and/or additional polyketides. The protein is Jasmonate monooxygenase ABM of Pyricularia oryzae (strain 70-15 / ATCC MYA-4617 / FGSC 8958) (Rice blast fungus).